Reading from the N-terminus, the 157-residue chain is Endoribonuclease YbeY (157 aa).

The Zn(2+) site is built by His114, His118, and His124.

This sequence belongs to the endoribonuclease YbeY family. It depends on Zn(2+) as a cofactor.

The protein localises to the cytoplasm. Single strand-specific metallo-endoribonuclease involved in late-stage 70S ribosome quality control and in maturation of the 3' terminus of the 16S rRNA. This is Endoribonuclease YbeY from Salmonella paratyphi A (strain AKU_12601).